The chain runs to 483 residues: ATP synthase subunit beta (483 aa).

Residue 169 to 176 (GGAGVGKT) coordinates ATP.

Belongs to the ATPase alpha/beta chains family. In terms of assembly, F-type ATPases have 2 components, CF(1) - the catalytic core - and CF(0) - the membrane proton channel. CF(1) has five subunits: alpha(3), beta(3), gamma(1), delta(1), epsilon(1). CF(0) has three main subunits: a(1), b(2) and c(9-12). The alpha and beta chains form an alternating ring which encloses part of the gamma chain. CF(1) is attached to CF(0) by a central stalk formed by the gamma and epsilon chains, while a peripheral stalk is formed by the delta and b chains.

The protein resides in the cell membrane. The enzyme catalyses ATP + H2O + 4 H(+)(in) = ADP + phosphate + 5 H(+)(out). Its function is as follows. Produces ATP from ADP in the presence of a proton gradient across the membrane. The catalytic sites are hosted primarily by the beta subunits. The chain is ATP synthase subunit beta from Corynebacterium glutamicum (strain R).